Here is a 187-residue protein sequence, read N- to C-terminus: dTTP/UTP pyrophosphatase (187 aa).

Aspartate 68 acts as the Proton acceptor in catalysis.

It belongs to the Maf family. YhdE subfamily. Requires a divalent metal cation as cofactor.

It localises to the cytoplasm. The enzyme catalyses dTTP + H2O = dTMP + diphosphate + H(+). It carries out the reaction UTP + H2O = UMP + diphosphate + H(+). Its function is as follows. Nucleoside triphosphate pyrophosphatase that hydrolyzes dTTP and UTP. May have a dual role in cell division arrest and in preventing the incorporation of modified nucleotides into cellular nucleic acids. This Thermus thermophilus (strain ATCC BAA-163 / DSM 7039 / HB27) protein is dTTP/UTP pyrophosphatase.